The primary structure comprises 392 residues: 1-deoxy-D-xylulose 5-phosphate reductoisomerase (392 aa).

Residues Thr-10, Gly-11, Ser-12, Ile-13, Arg-37, Gln-38, and Asn-124 each coordinate NADPH. Position 125 (Lys-125) interacts with 1-deoxy-D-xylulose 5-phosphate. Glu-126 lines the NADPH pocket. Asp-150 provides a ligand contact to Mn(2+). 1-deoxy-D-xylulose 5-phosphate-binding residues include Ser-151, Glu-152, Ser-179, and His-202. Glu-152 serves as a coordination point for Mn(2+). Gly-208 contacts NADPH. 1-deoxy-D-xylulose 5-phosphate-binding residues include Ser-215, Asn-220, Lys-221, and Glu-224. Glu-224 is a binding site for Mn(2+).

It belongs to the DXR family. The cofactor is Mg(2+). Mn(2+) is required as a cofactor.

It catalyses the reaction 2-C-methyl-D-erythritol 4-phosphate + NADP(+) = 1-deoxy-D-xylulose 5-phosphate + NADPH + H(+). It participates in isoprenoid biosynthesis; isopentenyl diphosphate biosynthesis via DXP pathway; isopentenyl diphosphate from 1-deoxy-D-xylulose 5-phosphate: step 1/6. Catalyzes the NADPH-dependent rearrangement and reduction of 1-deoxy-D-xylulose-5-phosphate (DXP) to 2-C-methyl-D-erythritol 4-phosphate (MEP). In Cupriavidus metallidurans (strain ATCC 43123 / DSM 2839 / NBRC 102507 / CH34) (Ralstonia metallidurans), this protein is 1-deoxy-D-xylulose 5-phosphate reductoisomerase.